A 254-amino-acid chain; its full sequence is Proteasome subunit alpha (254 aa).

Residues 234-254 (EEMLPTPAATEDAPANGDAPS) are disordered.

This sequence belongs to the peptidase T1A family. As to quaternary structure, the 20S proteasome core is composed of 14 alpha and 14 beta subunits that assemble into four stacked heptameric rings, resulting in a barrel-shaped structure. The two inner rings, each composed of seven catalytic beta subunits, are sandwiched by two outer rings, each composed of seven alpha subunits. The catalytic chamber with the active sites is on the inside of the barrel. Has a gated structure, the ends of the cylinder being occluded by the N-termini of the alpha-subunits. Is capped by the proteasome-associated ATPase, ARC.

The protein localises to the cytoplasm. It participates in protein degradation; proteasomal Pup-dependent pathway. With respect to regulation, the formation of the proteasomal ATPase ARC-20S proteasome complex, likely via the docking of the C-termini of ARC into the intersubunit pockets in the alpha-rings, may trigger opening of the gate for substrate entry. Interconversion between the open-gate and close-gate conformations leads to a dynamic regulation of the 20S proteasome proteolysis activity. Its function is as follows. Component of the proteasome core, a large protease complex with broad specificity involved in protein degradation. The protein is Proteasome subunit alpha of Rhodococcus erythropolis (strain PR4 / NBRC 100887).